The sequence spans 153 residues: Replicase large subunit (153 aa).

The protein belongs to the tobamovirus RNA-directed RNA polymerase family.

It catalyses the reaction RNA(n) + a ribonucleoside 5'-triphosphate = RNA(n+1) + diphosphate. Its function is as follows. The replicase large subunit is an RNA-dependent RNA polymerase active in viral RNA replication. In Citrullus (Cucumber), this protein is Replicase large subunit.